The sequence spans 550 residues: Hydroxylamine reductase (550 aa).

4 residues coordinate [2Fe-2S] cluster: Cys3, Cys6, Cys18, and Cys25. Hybrid [4Fe-2O-2S] cluster-binding residues include His249, Glu273, Cys317, Cys405, Cys433, Cys458, Glu492, and Lys494. The residue at position 405 (Cys405) is a Cysteine persulfide.

It belongs to the HCP family. The cofactor is [2Fe-2S] cluster. Hybrid [4Fe-2O-2S] cluster is required as a cofactor.

Its subcellular location is the cytoplasm. It catalyses the reaction A + NH4(+) + H2O = hydroxylamine + AH2 + H(+). Catalyzes the reduction of hydroxylamine to form NH(3) and H(2)O. This chain is Hydroxylamine reductase, found in Escherichia coli O17:K52:H18 (strain UMN026 / ExPEC).